A 266-amino-acid polypeptide reads, in one-letter code: Interleukin-1 beta (266 aa).

Positions 1 to 113 (MATVPEPINE…ETSSDELLCD (113 aa)) are excised as a propeptide.

Belongs to the IL-1 family. In terms of assembly, monomer. In its precursor form, weakly interacts with full-length MEFV; the mature cytokine does not interact at all. Interacts with integrins ITGAV:ITGBV and ITGA5:ITGB1; integrin-binding is required for IL1B signaling. Interacts with cargo receptor TMED10; the interaction is direct and is required for the secretion of IL1B mature form. Interacts with HSP90AB1; the interaction facilitates cargo translocation into the ERGIC. Interacts with HSP90B1; the interaction facilitates cargo translocation into the ERGIC.

Its subcellular location is the cytoplasm. The protein resides in the cytosol. The protein localises to the secreted. It is found in the lysosome. It localises to the extracellular exosome. Its function is as follows. Potent pro-inflammatory cytokine. Initially discovered as the major endogenous pyrogen, induces prostaglandin synthesis, neutrophil influx and activation, T-cell activation and cytokine production, B-cell activation and antibody production, and fibroblast proliferation and collagen production. Promotes Th17 differentiation of T-cells. Synergizes with IL12/interleukin-12 to induce IFNG synthesis from T-helper 1 (Th1) cells. Plays a role in angiogenesis by inducing VEGF production synergistically with TNF and IL6. Involved in transduction of inflammation downstream of pyroptosis: its mature form is specifically released in the extracellular milieu by passing through the gasdermin-D (GSDMD) pore. In Capra hircus (Goat), this protein is Interleukin-1 beta (IL1B).